The sequence spans 337 residues: uncharacterized protein (337 aa).

2 consecutive transmembrane segments (helical) span residues 4–24 (FIFF…FSLI) and 26–46 (LLLW…LFVL).

It belongs to the plectrovirus ORF2 family.

The protein resides in the host membrane. This is an uncharacterized protein from Spiroplasma virus SpV1-R8A2 B (SpV1).